The primary structure comprises 519 residues: 2,3-bisphosphoglycerate-independent phosphoglycerate mutase (519 aa).

Mn(2+) is bound by residues Asp-18 and Ser-68. Ser-68 acts as the Phosphoserine intermediate in catalysis. Residues His-129, 159–160 (RD), Arg-191, Arg-197, 267–270 (RADR), and Lys-341 each bind substrate. Mn(2+) is bound by residues Asp-408, His-412, Asp-449, His-450, and His-468.

The protein belongs to the BPG-independent phosphoglycerate mutase family. As to quaternary structure, monomer. The cofactor is Mn(2+).

The enzyme catalyses (2R)-2-phosphoglycerate = (2R)-3-phosphoglycerate. Its pathway is carbohydrate degradation; glycolysis; pyruvate from D-glyceraldehyde 3-phosphate: step 3/5. In terms of biological role, catalyzes the interconversion of 2-phosphoglycerate and 3-phosphoglycerate. The chain is 2,3-bisphosphoglycerate-independent phosphoglycerate mutase from Coxiella burnetii (strain RSA 493 / Nine Mile phase I).